A 55-amino-acid polypeptide reads, in one-letter code: Small ribosomal subunit protein uS14 (55 aa).

The disordered stretch occupies residues 1-20; sequence MSFEPSGPHSHRKPFGKGSR. Positions 22, 25, 38, and 41 each coordinate Zn(2+).

It belongs to the universal ribosomal protein uS14 family. Zn(2+) is required as a cofactor.

This Encephalitozoon cuniculi (strain GB-M1) (Microsporidian parasite) protein is Small ribosomal subunit protein uS14 (RPS29).